Reading from the N-terminus, the 391-residue chain is Probable acridone synthase 3 (391 aa).

Cys-164 is an active-site residue.

This sequence belongs to the thiolase-like superfamily. Chalcone/stilbene synthases family.

It carries out the reaction N-methylanthraniloyl-CoA + 3 malonyl-CoA + 3 H(+) = 1,3-dihydroxy-N-methylacridone + 3 CO2 + 4 CoA + H2O. This chain is Probable acridone synthase 3 (ACS3), found in Ruta graveolens (Common rue).